A 334-amino-acid polypeptide reads, in one-letter code: Glycerol-3-phosphate dehydrogenase [NAD(P)+] (334 aa).

5 residues coordinate NADPH: Ser10, Trp11, His31, Arg32, and Lys105. Sn-glycerol 3-phosphate contacts are provided by Lys105, Gly136, and Ser138. Ala140 is a binding site for NADPH. The sn-glycerol 3-phosphate site is built by Lys191, Asp244, Ser254, Arg255, and Asn256. The active-site Proton acceptor is Lys191. Position 255 (Arg255) interacts with NADPH. Positions 279 and 281 each coordinate NADPH.

The protein belongs to the NAD-dependent glycerol-3-phosphate dehydrogenase family.

It localises to the cytoplasm. It catalyses the reaction sn-glycerol 3-phosphate + NAD(+) = dihydroxyacetone phosphate + NADH + H(+). The enzyme catalyses sn-glycerol 3-phosphate + NADP(+) = dihydroxyacetone phosphate + NADPH + H(+). It participates in membrane lipid metabolism; glycerophospholipid metabolism. Catalyzes the reduction of the glycolytic intermediate dihydroxyacetone phosphate (DHAP) to sn-glycerol 3-phosphate (G3P), the key precursor for phospholipid synthesis. The polypeptide is Glycerol-3-phosphate dehydrogenase [NAD(P)+] (Chlorobium phaeobacteroides (strain BS1)).